Consider the following 308-residue polypeptide: Bifunctional protein FolD (308 aa).

NADP(+)-binding positions include 175–177, Ser200, and Ile241; that span reads GRS.

Belongs to the tetrahydrofolate dehydrogenase/cyclohydrolase family. Homodimer.

It catalyses the reaction (6R)-5,10-methylene-5,6,7,8-tetrahydrofolate + NADP(+) = (6R)-5,10-methenyltetrahydrofolate + NADPH. It carries out the reaction (6R)-5,10-methenyltetrahydrofolate + H2O = (6R)-10-formyltetrahydrofolate + H(+). It participates in one-carbon metabolism; tetrahydrofolate interconversion. Its function is as follows. Catalyzes the oxidation of 5,10-methylenetetrahydrofolate to 5,10-methenyltetrahydrofolate and then the hydrolysis of 5,10-methenyltetrahydrofolate to 10-formyltetrahydrofolate. The chain is Bifunctional protein FolD from Jannaschia sp. (strain CCS1).